Reading from the N-terminus, the 159-residue chain is D-aminoacyl-tRNA deacylase (159 aa).

The Gly-cisPro motif, important for rejection of L-amino acids motif lies at 142-143; that stretch reads GP.

Belongs to the DTD family. Homodimer.

The protein resides in the cytoplasm. It catalyses the reaction glycyl-tRNA(Ala) + H2O = tRNA(Ala) + glycine + H(+). The catalysed reaction is a D-aminoacyl-tRNA + H2O = a tRNA + a D-alpha-amino acid + H(+). Functionally, an aminoacyl-tRNA editing enzyme that deacylates mischarged D-aminoacyl-tRNAs. Also deacylates mischarged glycyl-tRNA(Ala), protecting cells against glycine mischarging by AlaRS. Acts via tRNA-based rather than protein-based catalysis; rejects L-amino acids rather than detecting D-amino acids in the active site. By recycling D-aminoacyl-tRNA to D-amino acids and free tRNA molecules, this enzyme counteracts the toxicity associated with the formation of D-aminoacyl-tRNA entities in vivo and helps enforce protein L-homochirality. The chain is D-aminoacyl-tRNA deacylase from Albidiferax ferrireducens (strain ATCC BAA-621 / DSM 15236 / T118) (Rhodoferax ferrireducens).